The sequence spans 181 residues: CDP-diacylglycerol--glycerol-3-phosphate 3-phosphatidyltransferase (181 aa).

4 helical membrane-spanning segments follow: residues 8–28 (PNYLTIARIMVIPVIILAFYI), 35–55 (KLGALLFVLASITDFFDGYIA), 64–84 (FGKMFDPIADKLLIGCVIIML), and 148–168 (IIYLDIVGEIILWIAAFLTII).

The protein belongs to the CDP-alcohol phosphatidyltransferase class-I family.

The protein resides in the cell membrane. The enzyme catalyses a CDP-1,2-diacyl-sn-glycerol + sn-glycerol 3-phosphate = a 1,2-diacyl-sn-glycero-3-phospho-(1'-sn-glycero-3'-phosphate) + CMP + H(+). The protein operates within phospholipid metabolism; phosphatidylglycerol biosynthesis; phosphatidylglycerol from CDP-diacylglycerol: step 1/2. In terms of biological role, this protein catalyzes the committed step to the synthesis of the acidic phospholipids. This is CDP-diacylglycerol--glycerol-3-phosphate 3-phosphatidyltransferase (pgsA) from Rickettsia felis (strain ATCC VR-1525 / URRWXCal2) (Rickettsia azadi).